Reading from the N-terminus, the 590-residue chain is Synaptotagmin-3 (590 aa).

Topologically, residues 1-54 (MSGDYEDDLCRRALILVSDLCARVRDADTNDRCQEFNDRIRGYPRGPDADISVS) are vesicular. The interval 10 to 34 (CRRALILVSDLCARVRDADTNDRCQ) is cysteine motif. Residues 55-75 (LLSVIVTFCGIVLLGVSLFVS) form a helical membrane-spanning segment. The Cytoplasmic segment spans residues 76–590 (WKLCWVPWRD…KGLSEKENSE (515 aa)). 3 disordered regions span residues 143–220 (AELL…VTSL), 234–260 (TQQT…LPGG), and 273–295 (ELYQ…GEAG). The span at 185–203 (SPELPSEGGAGSGLLLLPP) shows a compositional bias: low complexity. Polar residues predominate over residues 234–243 (TQQTLTSQPD). Over residues 278-295 (TGPGGRRSGGGPGSGEAG) the composition is skewed to gly residues. Arg-284 is subject to Omega-N-methylarginine. 2 consecutive C2 domains span residues 299–420 (PCGR…PLWR) and 431–565 (DLGE…EHWH). Asp-330, Asp-336, Asp-388, Phe-389, Asp-390, Ser-393, Asp-396, Asp-462, Asp-468, Asp-522, and Asp-524 together coordinate Ca(2+).

This sequence belongs to the synaptotagmin family. In terms of assembly, homodimer; disulfide-linked via the cysteine motif. Can also form heterodimers with SYT6, SYT9 and SYT10. Requires Ca(2+) as cofactor. As to expression, expressed in melanocytes.

It is found in the cell membrane. Its subcellular location is the cytoplasmic vesicle. The protein resides in the secretory vesicle membrane. Its function is as follows. Ca(2+) sensor involved in Ca(2+)-dependent exocytosis of secretory vesicles through Ca(2+) and phospholipid binding to the C2 domain. Ca(2+) induces binding of the C2-domains to phospholipid membranes and to assembled SNARE-complexes; both actions contribute to triggering exocytosis. Plays a role in dendrite formation by melanocytes. In Homo sapiens (Human), this protein is Synaptotagmin-3 (SYT3).